The following is a 92-amino-acid chain: Small ribosomal subunit protein uS19 (92 aa).

The protein belongs to the universal ribosomal protein uS19 family.

Functionally, protein S19 forms a complex with S13 that binds strongly to the 16S ribosomal RNA. This chain is Small ribosomal subunit protein uS19, found in Leptospira biflexa serovar Patoc (strain Patoc 1 / Ames).